We begin with the raw amino-acid sequence, 192 residues long: Orotate phosphoribosyltransferase (192 aa).

5-phospho-alpha-D-ribose 1-diphosphate is bound at residue 116–124; the sequence is EDIVTTGLS. Orotate-binding residues include Thr120 and Arg148.

The protein belongs to the purine/pyrimidine phosphoribosyltransferase family. PyrE subfamily. In terms of assembly, homodimer. Mg(2+) is required as a cofactor.

The catalysed reaction is orotidine 5'-phosphate + diphosphate = orotate + 5-phospho-alpha-D-ribose 1-diphosphate. Its pathway is pyrimidine metabolism; UMP biosynthesis via de novo pathway; UMP from orotate: step 1/2. Functionally, catalyzes the transfer of a ribosyl phosphate group from 5-phosphoribose 1-diphosphate to orotate, leading to the formation of orotidine monophosphate (OMP). The sequence is that of Orotate phosphoribosyltransferase from Bartonella bacilliformis (strain ATCC 35685 / KC583 / Herrer 020/F12,63).